A 249-amino-acid chain; its full sequence is Small ribosomal subunit protein uS2 (249 aa).

This sequence belongs to the universal ribosomal protein uS2 family.

This chain is Small ribosomal subunit protein uS2, found in Bordetella avium (strain 197N).